Reading from the N-terminus, the 268-residue chain is Nickel import ATP-binding protein NikE (268 aa).

In terms of domain architecture, ABC transporter spans 4–252; it reads LNVSDLSHHY…SSDAGRVLQN (249 aa). 45 to 52 is an ATP binding site; sequence GRSGCGKS.

The protein belongs to the ABC transporter superfamily. Nickel importer (TC 3.A.1.5.3) family. As to quaternary structure, the complex is composed of two ATP-binding proteins (NikD and NikE), two transmembrane proteins (NikB and NikC) and a solute-binding protein (NikA).

The protein localises to the cell inner membrane. It catalyses the reaction Ni(2+)(out) + ATP + H2O = Ni(2+)(in) + ADP + phosphate + H(+). Its function is as follows. Part of the ABC transporter complex NikABCDE involved in nickel import. Responsible for energy coupling to the transport system. The chain is Nickel import ATP-binding protein NikE from Escherichia coli O6:K15:H31 (strain 536 / UPEC).